Here is a 418-residue protein sequence, read N- to C-terminus: Histidine--tRNA ligase (418 aa).

It belongs to the class-II aminoacyl-tRNA synthetase family. Homodimer.

It is found in the cytoplasm. The catalysed reaction is tRNA(His) + L-histidine + ATP = L-histidyl-tRNA(His) + AMP + diphosphate + H(+). The polypeptide is Histidine--tRNA ligase (Dehalococcoides mccartyi (strain ATCC BAA-2266 / KCTC 15142 / 195) (Dehalococcoides ethenogenes (strain 195))).